Here is an 811-residue protein sequence, read N- to C-terminus: Auxin response factor 8 (811 aa).

Positions Phe-126–Thr-228 form a DNA-binding region, TF-B3. Disordered regions lie at residues His-467–His-496 and His-544–Thr-565. 2 stretches are compositionally biased toward polar residues: residues Tyr-469 to Leu-482 and His-544 to Pro-555. The region spanning Lys-705–Asp-789 is the PB1 domain.

This sequence belongs to the ARF family. As to quaternary structure, homodimers and heterodimers. In terms of tissue distribution, expressed in the whole plant.

The protein localises to the nucleus. Functionally, auxin response factors (ARFs) are transcriptional factors that bind specifically to the DNA sequence 5'-TGTCTC-3' found in the auxin-responsive promoter elements (AuxREs). Seems to act as transcriptional activator. Formation of heterodimers with Aux/IAA proteins may alter their ability to modulate early auxin response genes expression. Regulates both stamen and gynoecium maturation. Promotes jasmonic acid production. Partially redundant with ARF6. Involved in fruit initiation. Acts as an inhibitor to stop further carpel development in the absence of fertilization and the generation of signals required to initiate fruit and seed development. The protein is Auxin response factor 8 (ARF8) of Arabidopsis thaliana (Mouse-ear cress).